A 307-amino-acid polypeptide reads, in one-letter code: Ribosomal RNA small subunit methyltransferase H (307 aa).

Residues 34-36, Asp53, Leu88, Asp102, and Gln109 contribute to the S-adenosyl-L-methionine site; that span reads GGH.

It belongs to the methyltransferase superfamily. RsmH family.

The protein localises to the cytoplasm. The catalysed reaction is cytidine(1402) in 16S rRNA + S-adenosyl-L-methionine = N(4)-methylcytidine(1402) in 16S rRNA + S-adenosyl-L-homocysteine + H(+). Its function is as follows. Specifically methylates the N4 position of cytidine in position 1402 (C1402) of 16S rRNA. This is Ribosomal RNA small subunit methyltransferase H from Sulfurimonas denitrificans (strain ATCC 33889 / DSM 1251) (Thiomicrospira denitrificans (strain ATCC 33889 / DSM 1251)).